Reading from the N-terminus, the 176-residue chain is MDLPGPIHDFLLVFLGSGLLVGGLGVVLLPNPIFSAFSLGFVLVCISLLYILSNSHFVAAAQLLIYVGAINVLIIFAVMFMNDSEYSTDFNLWTVGNGITSLVCTTILFLLMSTILDTSWYGVIWTTRLNQILEQDLISNSQQIGIHLSTDFFLPFELISIILLVALIGAISVARQ.

Transmembrane regions (helical) follow at residues 10-30 (FLLV…VLLP), 32-52 (PIFS…LYIL), 61-81 (AQLL…VMFM), 92-112 (LWTV…FLLM), and 152-172 (FFLP…GAIS).

Belongs to the complex I subunit 6 family. As to quaternary structure, NDH is composed of at least 16 different subunits, 5 of which are encoded in the nucleus.

The protein resides in the plastid. Its subcellular location is the chloroplast thylakoid membrane. It carries out the reaction a plastoquinone + NADH + (n+1) H(+)(in) = a plastoquinol + NAD(+) + n H(+)(out). The catalysed reaction is a plastoquinone + NADPH + (n+1) H(+)(in) = a plastoquinol + NADP(+) + n H(+)(out). Its function is as follows. NDH shuttles electrons from NAD(P)H:plastoquinone, via FMN and iron-sulfur (Fe-S) centers, to quinones in the photosynthetic chain and possibly in a chloroplast respiratory chain. The immediate electron acceptor for the enzyme in this species is believed to be plastoquinone. Couples the redox reaction to proton translocation, and thus conserves the redox energy in a proton gradient. The protein is NAD(P)H-quinone oxidoreductase subunit 6, chloroplastic (ndhG) of Olimarabidopsis pumila (Dwarf rocket).